The following is a 467-amino-acid chain: Chromosomal replication initiator protein DnaA (467 aa).

The domain I, interacts with DnaA modulators stretch occupies residues 1–90 (MSLSLWQQCL…KPVTQTPQAA (90 aa)). Residues 91–130 (VTSNVAAPAQVAQTQPQRAAPSMRSGWDNVPAPAEPTYRS) are domain II. The domain III, AAA+ region stretch occupies residues 131–347 (NVNVKHTFDN…GALNRVIANA (217 aa)). The ATP site is built by G175, G177, K178, and T179. Positions 348–467 (NFTGRAITID…FSNLIRTLSS (120 aa)) are domain IV, binds dsDNA.

Belongs to the DnaA family. In terms of assembly, oligomerizes as a right-handed, spiral filament on DNA at oriC.

It is found in the cytoplasm. Its function is as follows. Plays an essential role in the initiation and regulation of chromosomal replication. ATP-DnaA binds to the origin of replication (oriC) to initiate formation of the DNA replication initiation complex once per cell cycle. Binds the DnaA box (a 9 base pair repeat at the origin) and separates the double-stranded (ds)DNA. Forms a right-handed helical filament on oriC DNA; dsDNA binds to the exterior of the filament while single-stranded (ss)DNA is stabiized in the filament's interior. The ATP-DnaA-oriC complex binds and stabilizes one strand of the AT-rich DNA unwinding element (DUE), permitting loading of DNA polymerase. After initiation quickly degrades to an ADP-DnaA complex that is not apt for DNA replication. Binds acidic phospholipids. The protein is Chromosomal replication initiator protein DnaA of Escherichia coli (strain ATCC 8739 / DSM 1576 / NBRC 3972 / NCIMB 8545 / WDCM 00012 / Crooks).